Consider the following 488-residue polypeptide: Microtubule-destabilizing protein 60 (488 aa).

A compositionally biased stretch (polar residues) spans 25-56 (AQEVSRFSENSNPNFVSHSTPLEKSSKSSAQK). Disordered stretches follow at residues 25 to 71 (AQEV…VFSP), 262 to 304 (HASV…TKKQ), and 436 to 457 (DRPF…PKFN). Low complexity predominate over residues 264-280 (SVSSSWDNSVSSLNSNG).

It belongs to the TPX2 family.

The protein localises to the cytoplasm. It localises to the cytoskeleton. Its function is as follows. Binds directly to microtubules. Microtubule-destabilizing protein involved in the PIF3-dependent positive regulation of hypocotyl cell elongation via the modulation of cortical microtubules dynamic in response to light and ethylene signaling. Promotes submergence-induced and ethylene-dependent underwater hypocotyl elongation. This is Microtubule-destabilizing protein 60 from Arabidopsis thaliana (Mouse-ear cress).